The following is a 150-amino-acid chain: UPF0756 membrane protein APL_0366 (150 aa).

Transmembrane regions (helical) follow at residues 12–34 (LVVL…ATVL), 52–72 (HGLS…IVSG), 82–102 (FLNW…WLGG), and 123–143 (IIGV…AGIL).

The protein belongs to the UPF0756 family.

It is found in the cell membrane. The polypeptide is UPF0756 membrane protein APL_0366 (Actinobacillus pleuropneumoniae serotype 5b (strain L20)).